We begin with the raw amino-acid sequence, 918 residues long: Aconitase-ribosomal protein bL21m fusion protein (918 aa).

The transit peptide at 1–30 directs the protein to the mitochondrion; the sequence is MATFARMKLCLSGSSQAIPSKGISLVAARF. Positions 31 to 811 are homocitrate dehydratase, mitochondrial; the sequence is QSTASRASYV…IDSIKQQPDH (781 aa). Substrate-binding positions include Q105 and 198 to 200; that span reads DSH. Residues C394, C457, and C460 each contribute to the [4Fe-4S] cluster site. Substrate contacts are provided by residues R484, R489, K619, and 680–681; that span reads AR. The large ribosomal subunit protein bL21m stretch occupies residues 812–918; sequence YADAYIFNRH…ILRVTELKLN (107 aa).

In the N-terminal section; belongs to the aconitase/IPM isomerase family. This sequence in the C-terminal section; belongs to the bacterial ribosomal protein bL21 family. As to quaternary structure, component of the mitochondrial large ribosomal subunit (mt-LSU). Mature yeast 74S mitochondrial ribosomes consist of a small (37S) and a large (54S) subunit. The 37S small subunit contains a 15S ribosomal RNA (15S mt-rRNA) and at least 32 different proteins. The 54S large subunit contains a 21S rRNA (21S mt-rRNA) and at least 45 different proteins. [4Fe-4S] cluster serves as cofactor.

Its subcellular location is the mitochondrion. It localises to the nucleus. It catalyses the reaction (2R)-homocitrate = cis-homoaconitate + H2O. The protein operates within amino-acid biosynthesis; L-lysine biosynthesis via AAA pathway; L-alpha-aminoadipate from 2-oxoglutarate: step 2/5. Its function is as follows. Catalyzes the reversible dehydration of (R)-homocitrate to cis-homoaconitate, a step in the alpha-aminoadipate pathway for lysine biosynthesis. In terms of biological role, component of the mitochondrial ribosome (mitoribosome), a dedicated translation machinery responsible for the synthesis of mitochondrial genome-encoded proteins, including at least some of the essential transmembrane subunits of the mitochondrial respiratory chain. The mitoribosomes are attached to the mitochondrial inner membrane and translation products are cotranslationally integrated into the membrane. The sequence is that of Aconitase-ribosomal protein bL21m fusion protein (aco2) from Schizosaccharomyces pombe (strain 972 / ATCC 24843) (Fission yeast).